Reading from the N-terminus, the 164-residue chain is Interferon gamma (164 aa).

The N-terminal stretch at 1–19 (MTCQTYNLFVLSVIMIYYG) is a signal peptide. N-linked (GlcNAc...) asparagine glycans are attached at residues N42 and N61.

It belongs to the type II (or gamma) interferon family. Homodimer.

Its subcellular location is the secreted. In terms of biological role, produced by lymphocytes activated by specific antigens or mitogens. IFN-gamma, in addition to having antiviral activity, has important immunoregulatory functions. It is a potent activator of macrophages, it has antiproliferative effects on transformed cells and it can potentiate the antiviral and antitumor effects of the type I interferons. This Coturnix japonica (Japanese quail) protein is Interferon gamma (IFNG).